The primary structure comprises 862 residues: MMKQFLDLKAKHPDAVMLFRCGDFYETYSTDAIVASEILGITLTKRANGKGKTIEMAGFPHHALDTYLPKLIRAGKRVAICDQLEDPKLTKKLVKRGITELVTPGVSINDNVLNYKENNFLAAVHFGKASCGVAFLDISTGEFLTAEGPFDYVDKLLNNFGPKEILFERGKRLMFEGNFGSKFFTFELDDWVFTESTAREKLLKHFETKNLKGFGVEHLKNGIIASGAILQYLTMTQHTQIGHITSLARIEEDKYVRLDKFTVRSLELIGSMNDGGSSLLNVIDRTISPMGARLLKRWMVFPLKDEKPINDRLNVVEYFFRQPDFKELIEEQLHLIGDLERIISKVAVGRVSPREVVQLKVALQAIEPIKQACLEADNASLNRIGEQLNLCISIRDRIAKEINNDPPLLINKGGVIKDGVNEELDELRRISYSGKDYLLQIQQRESEQTGIPSLKVAYNNVFGYYIEVRNIHKDKVPQEWIRKQTLVNAERYITQELKVYEEKILGAEDKILVLETQLYTDLVQALTEFIPQIQINANQIARLDCLLSFANVARENNYIRPVIEDNDVLDIRQGRHPVIEKQLPIGEKYIANDVMLDSASQQIIIITGPNMAGKSALLRQTALITLLAQIGSFVPAESAHIGLVDKIFTRVGASDNISVGESTFMVEMNEAADILNNVSSRSLVLFDELGRGTSTYDGISIAWAIVEYIHEHPKAKARTLFATHYHELNEMEKSFKRIKNYNVSVKEVDNKVIFLRKLERGGSEHSFGIHVAKMAGMPKSIVKRANTILKQLESDNRQQGISGKPLTEVSENRSGMQLSFFQLDDPILCQIRDEILNLDVNNLTPIEALNKLNDIKKIVRGK.

ATP is bound at residue 608 to 615; the sequence is GPNMAGKS.

The protein belongs to the DNA mismatch repair MutS family.

In terms of biological role, this protein is involved in the repair of mismatches in DNA. It is possible that it carries out the mismatch recognition step. This protein has a weak ATPase activity. The protein is DNA mismatch repair protein MutS of Bacteroides thetaiotaomicron (strain ATCC 29148 / DSM 2079 / JCM 5827 / CCUG 10774 / NCTC 10582 / VPI-5482 / E50).